The sequence spans 737 residues: Catalase-peroxidase (737 aa).

Residues 1 to 23 (MLKKILPVLITLAIVHNTPTAWA) form the signal peptide. The tryptophyl-tyrosyl-methioninium (Trp-Tyr) (with M-249) cross-link spans 102 to 223 (WHGAGTYRIY…LAATQMGLIY (122 aa)). H103 functions as the Proton acceptor in the catalytic mechanism. Residues 223–249 (YVNPEGPNGKPDPVAAAKDIREAFARM) constitute a cross-link (tryptophyl-tyrosyl-methioninium (Tyr-Met) (with W-102)). A heme b-binding site is contributed by H264.

This sequence belongs to the peroxidase family. Peroxidase/catalase subfamily. In terms of assembly, homodimer or homotetramer. Requires heme b as cofactor. In terms of processing, formation of the three residue Trp-Tyr-Met cross-link is important for the catalase, but not the peroxidase activity of the enzyme.

It catalyses the reaction H2O2 + AH2 = A + 2 H2O. It carries out the reaction 2 H2O2 = O2 + 2 H2O. Functionally, bifunctional enzyme with both catalase and broad-spectrum peroxidase activity. In Yersinia pseudotuberculosis serotype I (strain IP32953), this protein is Catalase-peroxidase.